We begin with the raw amino-acid sequence, 849 residues long: Thrombospondin type-1 domain-containing protein 1 (849 aa).

Positions M1–A24 are cleaved as a signal peptide. Residues E25–N413 are Extracellular-facing. Residues N39, N50, N55, N66, N77, N106, and N303 are each glycosylated (N-linked (GlcNAc...) asparagine). The TSP type-1 domain maps to I340–A393. 3 disulfides stabilise this stretch: C352–C387, C356–C392, and C367–C377. The chain crosses the membrane as a helical span at residues V414–T434. The Cytoplasmic segment spans residues L435 to I849. The residue at position 463 (S463) is a Phosphoserine. Disordered regions lie at residues S472 to F516, K595 to S799, and G828 to I849. Residues S479–G493 show a composition bias toward low complexity. Basic residues predominate over residues S636 to A651. The span at S652 to S666 shows a compositional bias: basic and acidic residues. Residues S720–P732 show a composition bias toward pro residues.

As to quaternary structure, part of a complex composed of THSD1, PTK2/FAK1, TLN1 and VCL. Interacts with TLN1.

Its subcellular location is the endosome membrane. The protein resides in the cell junction. It localises to the focal adhesion. Is a positive regulator of nascent focal adhesion assembly, involved in the modulation of endothelial cell attachment to the extracellular matrix. This is Thrombospondin type-1 domain-containing protein 1 (THSD1) from Bos taurus (Bovine).